The sequence spans 222 residues: Ribonuclease T (222 aa).

Positions 20–194 (VVIDVETAGF…YDTERTAELF (175 aa)) constitute an Exonuclease domain. Residues Asp-23, Glu-25, His-181, and Asp-186 each coordinate Mg(2+). His-181 functions as the Proton donor/acceptor in the catalytic mechanism.

The protein belongs to the RNase T family. As to quaternary structure, homodimer. The cofactor is Mg(2+).

In terms of biological role, trims short 3' overhangs of a variety of RNA species, leaving a one or two nucleotide 3' overhang. Responsible for the end-turnover of tRNA: specifically removes the terminal AMP residue from uncharged tRNA (tRNA-C-C-A). Also appears to be involved in tRNA biosynthesis. This Shewanella sp. (strain ANA-3) protein is Ribonuclease T.